The following is a 231-amino-acid chain: Extracellular deoxyribonuclease (231 aa).

The signal sequence occupies residues 1-20 (MMIFRFVTTLAASLPLLTFA).

This sequence belongs to the EndA/NucM nuclease family.

The protein localises to the secreted. The protein is Extracellular deoxyribonuclease (dns) of Vibrio cholerae serotype O1 (strain ATCC 39315 / El Tor Inaba N16961).